We begin with the raw amino-acid sequence, 671 residues long: MSTWGFASPTPDRFAVSAEAEDKVREQQTRLERIFNVGMSVLSKDCPENPHIWLQLEGPKENVCRAKEYLKGLCSPELQSEIHYPPRLHCIFLGAHGFFLDCLAWSTSAHLVPLLPGSLMISGLTEAFVMAQSRVEELVQRLSWDLQLQSCPGAPDNGGVLRDFSALLQTREDAYTEALLRLPLAVQEELLSLVQEASRGQGPSREVGSSGLLSPQFQGVRAPLNEGREFVGTRVAGSGKSPAVRGQSHTVEKEERKQDAVRDMGSGRKELSGEEVWEPGVAYRSQLAGGGAEEVAPLKGKASGKQEVPQQRGGFSVQGEPSGAHVPCQRAAPIRGASLLQRLHNGSASPPRVPSPPPAPEPPWPCGDRDRDRDRGDRGDKQQAGARGRGSPWKRGTRGGNLVTGTQRFQEALQDPFTLCLANVPGQPDLRHIVIDGSNVAMVHGLQHYFSSRGIALAVQYFWDRGHRDITVFVPQWRFSKDSKVRESHFLQKLYSLSLLSLTPSRVMDGKRISSYDDRFMVKLAEETDGIIVSNDQFRDLAEESDKWMAIIRERLLPFTFVGNLFMVPDDPLGRNGPTLDEFLKKPVRKQGSSKTQQPSKGSTEQANQQQGKDADRSNGGIRKTRETERLRRQLLEVFWGQDHKVDFILQREPYCRDINQLSEALLSLNF.

Disordered regions lie at residues 234–274 (RVAG…LSGE), 294–327 (EVAP…AHVP), 344–402 (HNGS…GGNL), and 577–626 (GPTL…RKTR). The span at 250–272 (TVEKEERKQDAVRDMGSGRKELS) shows a compositional bias: basic and acidic residues. Over residues 351-365 (PRVPSPPPAPEPPWP) the composition is skewed to pro residues. Ser355 is modified (phosphoserine). Residues 367-381 (GDRDRDRDRGDRGDK) are compositionally biased toward basic and acidic residues. Residues 430 to 582 (LRHIVIDGSN…LGRNGPTLDE (153 aa)) form the RNase NYN domain. Residues 591 to 612 (QGSSKTQQPSKGSTEQANQQQG) are compositionally biased toward polar residues.

It belongs to the N4BP1 family.

The polypeptide is Protein KHNYN (Khnyn) (Mus musculus (Mouse)).